The following is a 707-amino-acid chain: MVAFGKKLKERSIEEWQEYYINYKLMKKKVKQYGPQIEVGSLDRRHVLKDFSRMLDHQIEKIALFMLEQQGLLSSRLQKLREWHDTLQDEPDLSQIAKLREAYRAVGQDLLKLLFFIDMNAIGIRKILKKFDKRFGYRFTNYYVKTRADHPYSQLQQVFRHVGLGAVVGAISRNLHELQNNEGSYLSIYDQPVLPLQDPVVDSIKNAVDRLTHSTNFLNFMAQHALIMQDDEDLLMLPPDEQAEKEEGRYHFMSLLLNLANTFLYMVNTYIIVPTADDYSMSLGAAATVCGVVIGAMAVAQLFSSVYFSAWSNKSYFKPLIFSSIVLFFGNLLYALAYDFNSLALLLIGRLFCGFGSARAVNRRYISDCVPLKIRMQASAGFVSASALGMACGPALAGLLQTDFKIKNVTFNQDTLPGWVMAVAWLLYLVWLAISFREPAREPEEIHTSQESTSEQIFCGEADQDGNIEKGLKKPLLLASEETEHDEEDDGDGSEESSDDSRKPANSFVAAYKLLTPSVKVQLLIYFMLKYAMEILLSESSVVTTYYFGWSMSSVSIFLFCLGLTVLPVNLVVGSYISNMFEDRQILLASEIMVCIGIVLSFHVVIPYTVPQYVISGFIMFVSAEVLEGVNLSLLSRVMSSRLSRGTYNGGLLSTEAGTIARVIADATITLAGFLGQSMLLNVTLLPSLIICVLSILATCYTYNSLY.

One can recognise an SPX domain in the interval 2–145; that stretch reads VAFGKKLKER…GYRFTNYYVK (144 aa). Helical transmembrane passes span 252–272, 283–303, 320–340, 342–361, 380–400, and 416–436; these read FMSL…TYII, LGAA…AQLF, LIFS…AYDF, SLAL…ARAV, AGFV…AGLL, and LPGW…AISF. The span at 481–498 shows a compositional bias: acidic residues; that stretch reads EETEHDEEDDGDGSEESS. The disordered stretch occupies residues 481–503; the sequence is EETEHDEEDDGDGSEESSDDSRK. A run of 5 helical transmembrane segments spans residues 523 to 543, 557 to 577, 586 to 606, 614 to 634, and 679 to 699; these read LLIY…SSVV, IFLF…GSYI, ILLA…HVVI, VISG…NLSL, and MLLN…ILAT.

This sequence belongs to the major facilitator superfamily.

Its subcellular location is the membrane. The protein is SPX domain-containing membrane protein At4g11810 of Arabidopsis thaliana (Mouse-ear cress).